The following is a 254-amino-acid chain: Peptide methionine sulfoxide reductase A5 (254 aa).

The first 33 residues, 1–33 (MAISLKRNRFFIPYTNLVFFFFLCVSLLDKTVS), serve as a signal peptide directing secretion.

This sequence belongs to the MsrA Met sulfoxide reductase family.

The catalysed reaction is L-methionyl-[protein] + [thioredoxin]-disulfide + H2O = L-methionyl-(S)-S-oxide-[protein] + [thioredoxin]-dithiol. It catalyses the reaction [thioredoxin]-disulfide + L-methionine + H2O = L-methionine (S)-S-oxide + [thioredoxin]-dithiol. Functionally, catalyzes the reduction of methionine sulfoxide (MetSO) to methionine in proteins. Plays a protective role against oxidative stress by restoring activity to proteins that have been inactivated by methionine oxidation. MSRA family specifically reduces the MetSO S-enantiomer. This chain is Peptide methionine sulfoxide reductase A5 (MSRA5), found in Arabidopsis thaliana (Mouse-ear cress).